Consider the following 366-residue polypeptide: Spermidine/putrescine import ATP-binding protein PotA (366 aa).

The 232-residue stretch at 8-239 (IRFENVTKQF…PINKFVADFI (232 aa)) folds into the ABC transporter domain. An ATP-binding site is contributed by 41–48 (GPSGCGKT).

Belongs to the ABC transporter superfamily. Spermidine/putrescine importer (TC 3.A.1.11.1) family. The complex is composed of two ATP-binding proteins (PotA), two transmembrane proteins (PotB and PotC) and a solute-binding protein (PotD).

It is found in the cell membrane. The enzyme catalyses ATP + H2O + polyamine-[polyamine-binding protein]Side 1 = ADP + phosphate + polyamineSide 2 + [polyamine-binding protein]Side 1.. Functionally, part of the ABC transporter complex PotABCD involved in spermidine/putrescine import. Responsible for energy coupling to the transport system. In Listeria innocua serovar 6a (strain ATCC BAA-680 / CLIP 11262), this protein is Spermidine/putrescine import ATP-binding protein PotA.